Consider the following 2289-residue polypeptide: DNA polymerase II large subunit (2289 aa).

Disordered regions lie at residues 279-330 and 544-563; these read IGSD…SPRA and SDTN…NTDD. Basic and acidic residues predominate over residues 292–304; sequence GEADIVKTDKDTN. Residues 305–318 show a composition bias toward acidic residues; the sequence is ESETEDGIDNDDYN. The span at 544 to 557 shows a compositional bias: polar residues; sequence SDTNSASGNTSLRA. DOD-type homing endonuclease domains lie at 1222 to 1367 and 1755 to 1911; these read LLGY…RLGI and LLGQ…RLGV.

The protein belongs to the archaeal DNA polymerase II family. As to quaternary structure, heterodimer of a large subunit and a small subunit. In terms of processing, this protein undergoes a protein self splicing that involves a post-translational excision of the intervening region (intein) followed by peptide ligation.

It catalyses the reaction DNA(n) + a 2'-deoxyribonucleoside 5'-triphosphate = DNA(n+1) + diphosphate. The enzyme catalyses Exonucleolytic cleavage in the 3'- to 5'-direction to yield nucleoside 5'-phosphates.. Possesses two activities: a DNA synthesis (polymerase) and an exonucleolytic activity that degrades single-stranded DNA in the 3'- to 5'-direction. Has a template-primer preference which is characteristic of a replicative DNA polymerase. The chain is DNA polymerase II large subunit from Haloquadratum walsbyi (strain DSM 16790 / HBSQ001).